The primary structure comprises 291 residues: 4-hydroxy-tetrahydrodipicolinate synthase (291 aa).

Thr45 provides a ligand contact to pyruvate. The active-site Proton donor/acceptor is the Tyr133. Lys161 serves as the catalytic Schiff-base intermediate with substrate. Residue Ile203 coordinates pyruvate.

It belongs to the DapA family. Homotetramer; dimer of dimers.

It localises to the cytoplasm. The catalysed reaction is L-aspartate 4-semialdehyde + pyruvate = (2S,4S)-4-hydroxy-2,3,4,5-tetrahydrodipicolinate + H2O + H(+). It functions in the pathway amino-acid biosynthesis; L-lysine biosynthesis via DAP pathway; (S)-tetrahydrodipicolinate from L-aspartate: step 3/4. In terms of biological role, catalyzes the condensation of (S)-aspartate-beta-semialdehyde [(S)-ASA] and pyruvate to 4-hydroxy-tetrahydrodipicolinate (HTPA). This Laribacter hongkongensis (strain HLHK9) protein is 4-hydroxy-tetrahydrodipicolinate synthase.